Consider the following 160-residue polypeptide: Ureidoglycolate lyase (160 aa).

The protein belongs to the ureidoglycolate lyase family. In terms of assembly, homodimer. Ni(2+) is required as a cofactor.

The catalysed reaction is (S)-ureidoglycolate = urea + glyoxylate. It participates in nitrogen metabolism; (S)-allantoin degradation. Its function is as follows. Catalyzes the catabolism of the allantoin degradation intermediate (S)-ureidoglycolate, generating urea and glyoxylate. Involved in the anaerobic utilization of allantoin as sole nitrogen source. Reinforces the induction of genes involved in the degradation of allantoin and glyoxylate by producing glyoxylate. The protein is Ureidoglycolate lyase of Escherichia coli O127:H6 (strain E2348/69 / EPEC).